A 260-amino-acid polypeptide reads, in one-letter code: Endonuclease NucS (260 aa).

It belongs to the NucS endonuclease family.

The protein resides in the cytoplasm. Cleaves both 3' and 5' ssDNA extremities of branched DNA structures. This is Endonuclease NucS from Methanopyrus kandleri (strain AV19 / DSM 6324 / JCM 9639 / NBRC 100938).